The primary structure comprises 105 residues: uncharacterized protein (105 aa).

This is an uncharacterized protein from Bacillus subtilis (strain 168).